Here is a 50-residue protein sequence, read N- to C-terminus: Temporin-SHa (50 aa).

An N-terminal signal peptide occupies residues 1–10 (FLGTINLSLC). A propeptide spanning residues 11 to 35 (EQERDADEEERRDEPNESNVEVEKR) is cleaved from the precursor. Phe48 carries the phenylalanine amide modification.

This sequence belongs to the frog skin active peptide (FSAP) family. Temporin subfamily. As to expression, expressed by the skin glands.

It localises to the secreted. Its subcellular location is the target cell membrane. In terms of biological role, amphipathic alpha-helical antimicrobial peptide with highly potent activity against Gram-positive bacteria, and potent activity Gram-negative bacteria and fungi (MIC=2-30 uM). Acts through membranolytic mechanism involving rapid membrane permeabilization and depolarization. Shows a direct extra-cellular antiviral activity probably through degradation of the viral envelope. Also shows a weak indirect antiviral activity by inhibiting virus replication. Also displays anti-trypanosoma and anti-leishmania (prosmastigotes and axenic amastigotes) activity through membranolytic mechanism. Also induces apoptosis in leishmania promastigotes at high peptide concentrations. Shows moderate hemolytic activity (LC(50)=25 uM). In contrast to many antibiotics, this peptide does not induce bacterial resistance. The polypeptide is Temporin-SHa (Pelophylax saharicus (Sahara frog)).